The chain runs to 160 residues: Probable NADH dehydrogenase [ubiquinone] 1 beta subcomplex subunit 2, mitochondrial (160 aa).

This sequence belongs to the complex I NDUFB2 subunit family. In terms of assembly, complex I is composed of 45 different subunits.

The protein resides in the mitochondrion inner membrane. Accessory subunit of the mitochondrial membrane respiratory chain NADH dehydrogenase (Complex I), that is believed not to be involved in catalysis. Complex I functions in the transfer of electrons from NADH to the respiratory chain. The immediate electron acceptor for the enzyme is believed to be ubiquinone. The protein is Probable NADH dehydrogenase [ubiquinone] 1 beta subcomplex subunit 2, mitochondrial of Caenorhabditis elegans.